A 617-amino-acid polypeptide reads, in one-letter code: ATP-dependent rRNA helicase SPB4 (617 aa).

A Q motif motif is present at residues 7–35 (WADLDYELQPWIKKAINVSGFDSMTPVQA). One can recognise a Helicase ATP-binding domain in the interval 38–224 (IPMFAKNKDV…KTGLRNPVKI (187 aa)). 51 to 58 (SVTGSGKT) is an ATP binding site. Residues 172 to 175 (DEAD) carry the DEAD box motif. A Helicase C-terminal domain is found at 252 to 406 (NLIHIMNNIR…ETDINKNKIS (155 aa)).

The protein belongs to the DEAD box helicase family. DDX55/SPB4 subfamily. Component of pre-60S ribosomal complexes.

The protein localises to the nucleus. The protein resides in the nucleolus. The enzyme catalyses ATP + H2O = ADP + phosphate + H(+). Its function is as follows. ATP-binding RNA helicase involved in the biogenesis of 60S ribosomal subunits. Binds 90S pre-ribosomal particles and dissociates from pre-60S ribosomal particles after processing of 27SB pre-rRNA. Required for the normal formation of 18S rRNA through the processing of pre-rRNAs at sites A0, A1 and A2, and the normal formation of 25S and 5.8S rRNAs through the processing of pre-rRNAs at sites C1 and C2. The protein is ATP-dependent rRNA helicase SPB4 of Candida glabrata (strain ATCC 2001 / BCRC 20586 / JCM 3761 / NBRC 0622 / NRRL Y-65 / CBS 138) (Yeast).